Consider the following 62-residue polypeptide: Sucrase-isomaltase, intestinal (62 aa).

Residues 2–12 lie on the Cytoplasmic side of the membrane; it reads ARKKFSGLEIX. Residue S7 is modified to Phosphoserine; by PKA. Residues 13–32 form a helical; Signal-anchor for type II membrane protein membrane-spanning segment; sequence LIVLFAIVLSIAIALVVVXA. The Lumenal segment spans residues 33-38; the sequence is SKXPAV. Y59 is modified (sulfotyrosine).

This sequence belongs to the glycosyl hydrolase 31 family. The resulting sucrase and isomaltase subunits stay associated with one another in a complex by non-covalent linkages. The precursor is proteolytically cleaved when exposed to pancreatic proteases in the intestinal lumen. In terms of processing, sulfated.

Its subcellular location is the apical cell membrane. It carries out the reaction Hydrolysis of sucrose and maltose by an alpha-D-glucosidase-type action.. It catalyses the reaction Hydrolysis of (1-&gt;6)-alpha-D-glucosidic linkages in some oligosaccharides produced from starch and glycogen by alpha-amylase, and in isomaltose.. In terms of biological role, plays an important role in the final stage of carbohydrate digestion. Isomaltase activity is specific for both alpha-1,4- and alpha-1,6-oligosaccharides. The polypeptide is Sucrase-isomaltase, intestinal (SI) (Sus scrofa (Pig)).